Here is an 88-residue protein sequence, read N- to C-terminus: Small ribosomal subunit protein uS15 (88 aa).

Belongs to the universal ribosomal protein uS15 family. Part of the 30S ribosomal subunit. Forms a bridge to the 50S subunit in the 70S ribosome, contacting the 23S rRNA.

In terms of biological role, one of the primary rRNA binding proteins, it binds directly to 16S rRNA where it helps nucleate assembly of the platform of the 30S subunit by binding and bridging several RNA helices of the 16S rRNA. Forms an intersubunit bridge (bridge B4) with the 23S rRNA of the 50S subunit in the ribosome. The protein is Small ribosomal subunit protein uS15 of Mycoplasma capricolum subsp. capricolum (strain California kid / ATCC 27343 / NCTC 10154).